A 327-amino-acid chain; its full sequence is MENVFDYEDIQLIPAKCIVNSRSECDTTVTLGKHKFKLPVVPANMQTIIDERIATYLAENNYFYIMHRFQPEKRISFIRDMQSRGLIASISVGVKEDEYEFVQQLAAEHLTPEYITIDIAHGHSNAVINMIQHIKKHLPESFVIAGNVGTPEAVRELENAGADATKVGIGPGKVCITKIKTGFGTGGWQLAALRWCAKAASKPIIADGGIRTHGDVAKSIRFGATMVMIGSLFAGHEESPGETIEKDGKLYKEYFGSASEFQKGEKKNVEGKKMFVEHKGSLEDTLIEMEQDLQSSISYAGGTKLDSIRTVDYVVVKNSIFNGDKVY.

The active-site Thioimidate intermediate is Cys175. Ile204–Val227 lines the NADP(+) pocket.

The protein belongs to the IMPDH/GMPR family. GuaC type 2 subfamily.

The enzyme catalyses IMP + NH4(+) + NADP(+) = GMP + NADPH + 2 H(+). Its function is as follows. Catalyzes the irreversible NADPH-dependent deamination of GMP to IMP. It functions in the conversion of nucleobase, nucleoside and nucleotide derivatives of G to A nucleotides, and in maintaining the intracellular balance of A and G nucleotides. The chain is GMP reductase from Bacillus thuringiensis subsp. konkukian (strain 97-27).